The primary structure comprises 82 residues: uncharacterized protein (82 aa).

A 2Fe-2S ferredoxin-type domain is found at 1-82 (MKIHLIRHNT…HVESDIEIDL (82 aa)). [2Fe-2S] cluster-binding residues include Cys-35, Cys-40, Cys-43, and Cys-72.

The cofactor is [2Fe-2S] cluster.

This is an uncharacterized protein from Haemophilus influenzae (strain ATCC 51907 / DSM 11121 / KW20 / Rd).